The sequence spans 1412 residues: DNA-directed RNA polymerase subunit beta' (1412 aa).

Residues cysteine 70, cysteine 72, cysteine 85, and cysteine 88 each contribute to the Zn(2+) site. Residues aspartate 460, aspartate 462, and aspartate 464 each coordinate Mg(2+). Residues cysteine 819, cysteine 893, cysteine 900, and cysteine 903 each contribute to the Zn(2+) site. Residues 1391–1412 (AEESFEFGTPETPAAEQQHSGE) are disordered.

It belongs to the RNA polymerase beta' chain family. The RNAP catalytic core consists of 2 alpha, 1 beta, 1 beta' and 1 omega subunit. When a sigma factor is associated with the core the holoenzyme is formed, which can initiate transcription. Mg(2+) is required as a cofactor. It depends on Zn(2+) as a cofactor.

It carries out the reaction RNA(n) + a ribonucleoside 5'-triphosphate = RNA(n+1) + diphosphate. DNA-dependent RNA polymerase catalyzes the transcription of DNA into RNA using the four ribonucleoside triphosphates as substrates. The chain is DNA-directed RNA polymerase subunit beta' from Paraburkholderia phytofirmans (strain DSM 17436 / LMG 22146 / PsJN) (Burkholderia phytofirmans).